The chain runs to 566 residues: uncharacterized protein (566 aa).

This sequence belongs to the protein kinase superfamily. ADCK protein kinase family.

This is an uncharacterized protein from Synechocystis sp. (strain ATCC 27184 / PCC 6803 / Kazusa).